The chain runs to 356 residues: Alanine racemase (356 aa).

Lysine 34 functions as the Proton acceptor; specific for D-alanine in the catalytic mechanism. Lysine 34 bears the N6-(pyridoxal phosphate)lysine mark. Arginine 129 serves as a coordination point for substrate. The active-site Proton acceptor; specific for L-alanine is the tyrosine 253. Methionine 301 provides a ligand contact to substrate.

It belongs to the alanine racemase family. Requires pyridoxal 5'-phosphate as cofactor.

It catalyses the reaction L-alanine = D-alanine. The protein operates within amino-acid biosynthesis; D-alanine biosynthesis; D-alanine from L-alanine: step 1/1. Functionally, catalyzes the interconversion of L-alanine and D-alanine. May also act on other amino acids. The protein is Alanine racemase (alr) of Nitrosococcus oceani (strain ATCC 19707 / BCRC 17464 / JCM 30415 / NCIMB 11848 / C-107).